A 587-amino-acid chain; its full sequence is Formate--tetrahydrofolate ligase (587 aa).

Residue 73–80 participates in ATP binding; sequence TPLGEGKS.

Belongs to the formate--tetrahydrofolate ligase family.

The catalysed reaction is (6S)-5,6,7,8-tetrahydrofolate + formate + ATP = (6R)-10-formyltetrahydrofolate + ADP + phosphate. Its pathway is one-carbon metabolism; tetrahydrofolate interconversion. This is Formate--tetrahydrofolate ligase from Desulfosudis oleivorans (strain DSM 6200 / JCM 39069 / Hxd3) (Desulfococcus oleovorans).